The sequence spans 480 residues: Ribosomal protein uS12 methylthiotransferase RimO (480 aa).

The MTTase N-terminal domain maps to 14-135 (LSVAMVTLGC…IAARLRSIVA (122 aa)). [4Fe-4S] cluster is bound by residues cysteine 23, cysteine 59, cysteine 98, cysteine 193, cysteine 197, and cysteine 200. The 232-residue stretch at 179 to 410 (LDDGPTAALK…DLVEELTSQR (232 aa)) folds into the Radical SAM core domain. Residues 412 to 480 (AERLGEQVEV…EGADLDARPL (69 aa)) enclose the TRAM domain.

It belongs to the methylthiotransferase family. RimO subfamily. [4Fe-4S] cluster serves as cofactor.

It localises to the cytoplasm. It carries out the reaction L-aspartate(89)-[ribosomal protein uS12]-hydrogen + (sulfur carrier)-SH + AH2 + 2 S-adenosyl-L-methionine = 3-methylsulfanyl-L-aspartate(89)-[ribosomal protein uS12]-hydrogen + (sulfur carrier)-H + 5'-deoxyadenosine + L-methionine + A + S-adenosyl-L-homocysteine + 2 H(+). In terms of biological role, catalyzes the methylthiolation of an aspartic acid residue of ribosomal protein uS12. This chain is Ribosomal protein uS12 methylthiotransferase RimO, found in Nocardioides sp. (strain ATCC BAA-499 / JS614).